We begin with the raw amino-acid sequence, 1027 residues long: MAGKARVHELAKELGVTSKEVLNKLAEQGEYVKSASSTVEAPVARRLRDAFPKSGGKKGGGDSNGRAGGAKPAPPRPPESSGRTEAQAPKPGPKPGPRTETPSGERPKPGPKPGPKPGPKAPAPETKPFEEAPAPAAKADAPAQPRSEQPRSEQPRSEQPRSEQPRSERSGPKPGGPKPGPKPGPKPGPRGGGDADAGVVPPKPQSPKPGPRSPRVGNNPFGVGSGAPAQRPPRPGPGGGQRQGGQGPGRGGPQGGRPDRQGGGGQGAGTAPAGGDRAPRGEGGGGGNRPNPGMMPPRPNPGMMPSRPARSGGGPGGGRGGGRGGPGGGGGGRPGGGGGGGRPGGGGGGFRGGGGPGAGAGTGAPAGGGFRGRPGGGGRPGGPGGRGGAAGAFGRPGGPARRGRKSKRQKRQEYMDNMQAPSVGGVRLPRGNGESVRLRRGASLTDFAEKINANPASLVQAMFHLGEMVTATQSVSDEILELLGSEMNYKVEMVSPEDEDRELLESFDISFGDPGSSDEELMSRPPVVTVMGHVDHGKTRLLDTIRKANVQAGEAGGITQHIGAYQVITELEGNERPITFIDTPGHEAFTAMRARGAKSTDIAVLVVAADDGVMPQTVEALNHAQAAGVPIVVAVNKIDVEGANPAKVRQQLTEYNLVAEEYGGETMFVDISARQGTNIESLLEAILLTADATLDLRANPSMEAQGVAIEAHLDRGRGPVATVLVQRGTLRVGDSVVAGNAFGRVRRMINEHDEDVTEALPSRPVQVIGFTSVPGAGDTFLVVDEDRVARQIADRRGARIREAQNAAKRKRVSLEDLDKVLKETNQLNLIIKGDNSGTVEALEESLTKIEVGEEVELRVIHRGVGGINESDINLATAENTIVLGFNVRAEGKAAEVANREGVEIRYYSVIYRAIEDIEQALKGMLKPEYEEVELGRAEVREVFKSSKVGTIAGCMVTDGIMRRNAKARLLRDNVVISENLTVTSLKRFKDDATEVRDGFECGLTLSYSDIKVDDIIETYEMREKPRA.

The tract at residues Y31–G433 is disordered. Residues K57 to G68 show a composition bias toward gly residues. Residues G110–P122 are compositionally biased toward pro residues. Residues A123–P145 show a composition bias toward low complexity. Residues E148–G171 are compositionally biased toward basic and acidic residues. Composition is skewed to pro residues over residues P174–G188 and P201–R212. Positions P237–A268 are enriched in gly residues. Residues G293–G302 show a composition bias toward pro residues. A compositionally biased stretch (gly residues) spans S311 to G397. Positions R401–K410 are enriched in basic residues. A tr-type G domain is found at S523–D695. The tract at residues G532–T539 is G1. G532–T539 contributes to the GTP binding site. The segment at G557 to H561 is G2. Residues D582–G585 are G3. Residues D582 to H586 and N636 to D639 contribute to the GTP site. The interval N636–D639 is G4. The interval S672 to R674 is G5.

This sequence belongs to the TRAFAC class translation factor GTPase superfamily. Classic translation factor GTPase family. IF-2 subfamily.

The protein resides in the cytoplasm. One of the essential components for the initiation of protein synthesis. Protects formylmethionyl-tRNA from spontaneous hydrolysis and promotes its binding to the 30S ribosomal subunits. Also involved in the hydrolysis of GTP during the formation of the 70S ribosomal complex. This chain is Translation initiation factor IF-2, found in Saccharopolyspora erythraea (strain ATCC 11635 / DSM 40517 / JCM 4748 / NBRC 13426 / NCIMB 8594 / NRRL 2338).